The primary structure comprises 133 residues: Small ribosomal subunit protein uS11 (133 aa).

Belongs to the universal ribosomal protein uS11 family. As to quaternary structure, part of the 30S ribosomal subunit.

In terms of biological role, located on the platform of the 30S subunit. This Aeropyrum pernix (strain ATCC 700893 / DSM 11879 / JCM 9820 / NBRC 100138 / K1) protein is Small ribosomal subunit protein uS11.